Here is a 387-residue protein sequence, read N- to C-terminus: Zinc transporter 7 (387 aa).

Over 1-37 (MLPLSIKDDEYKPAKFNLVVKLSGWFRSILADKTSRN) the chain is Cytoplasmic. Residues 38–58 (LFFFLCLNLSFAFVELLYGIW) traverse the membrane as a helical segment. Residues 59 to 67 (SNSLGLISD) are Lumenal-facing. A helical transmembrane segment spans residues 68–88 (SFHMFFDCTALLAGLAASVIS). At 89-102 (RWRSNDSFSYGYVR) the chain is on the cytoplasmic side. Residues 103-123 (AEVLAGFVNGLFLIFTAFFIF) traverse the membrane as a helical segment. The Lumenal portion of the chain corresponds to 124-140 (SEGVERALEPPDVHHDR). The chain crosses the membrane as a helical span at residues 141–161 (LLPVSIAGLLVNLVGIFVFQH). The interval 161–232 (HGGHGHSHGG…HDDQHCHDDH (72 aa)) is his-rich loop. The Cytoplasmic portion of the chain corresponds to 162 to 247 (GGHGHSHGGD…KGSSKQILQG (86 aa)). The segment at 167–237 (SHGGDDHGHS…CHDDHTLTPG (71 aa)) is disordered. Residues 187–201 (GHSHGGHGHSHGGHG) are compositionally biased toward basic residues. 2 stretches are compositionally biased toward basic and acidic residues: residues 202 to 214 (HSHESKHGHDHGH) and 221 to 233 (HSHDDQHCHDDHT). The chain crosses the membrane as a helical span at residues 248–268 (VFLHIVADTLGSVGVIISAIL). At 269 to 273 (MQKYD) the chain is on the lumenal side. Residues 274–294 (LMIADPICSMLIALLIGVSVV) traverse the membrane as a helical segment. Residues 295 to 387 (PLLRESIGIL…LYVQIEVAAM (93 aa)) lie on the Cytoplasmic side of the membrane.

Belongs to the cation diffusion facilitator (CDF) transporter (TC 2.A.4) family. SLC30A subfamily. In terms of assembly, homooligomer.

The protein localises to the golgi apparatus membrane. Its subcellular location is the cytoplasmic vesicle. The protein resides in the golgi apparatus. It is found in the trans-Golgi network. It localises to the sarcoplasmic reticulum. The protein localises to the mitochondrion. It catalyses the reaction Zn(2+)(in) = Zn(2+)(out). Functionally, zinc ion transporter mediating zinc entry from the cytosol into the lumen of organelles along the secretory pathway. By contributing to zinc ion homeostasis within the early secretory pathway, regulates the activation and folding of enzymes like alkaline phosphatases. The polypeptide is Zinc transporter 7 (slc30a7) (Danio rerio (Zebrafish)).